A 297-amino-acid polypeptide reads, in one-letter code: Homoserine kinase (297 aa).

82 to 92 (PLTRGLGSSAS) is an ATP binding site.

The protein belongs to the GHMP kinase family. Homoserine kinase subfamily.

Its subcellular location is the cytoplasm. It catalyses the reaction L-homoserine + ATP = O-phospho-L-homoserine + ADP + H(+). Its pathway is amino-acid biosynthesis; L-threonine biosynthesis; L-threonine from L-aspartate: step 4/5. Functionally, catalyzes the ATP-dependent phosphorylation of L-homoserine to L-homoserine phosphate. The chain is Homoserine kinase from Bacillus mycoides (strain KBAB4) (Bacillus weihenstephanensis).